A 736-amino-acid polypeptide reads, in one-letter code: MATEGMILTNHDHQIRVGVLTVSDSCFRNLAEDRSGINLKDLVQDPSLLGGTISAYKIVPDEIEEIKETLIDWCDEKELNLILTTGGTGFAPRDVTPEATKEVIEREAPGMALAMLMGSLNVTPLGMLSRPVCGIRGKTLIINLPGSKKGSQECFQFILPALPHAIDLLRDAIVKVKEVHDELEDLPSPPPPLSPPPTTSPHKQTEDKGVQCEEEEEEKKDSGVASTEDSSSSHITAAAIAAKIPDSIISRGVQVLPRDTASLSTTPSESPRAQATSRLSTASCPTPKVQSRCSSKENILRASHSAVDITKVARRHRMSPFPLTSMDKAFITVLEMTPVLGTEIINYRDGMGRVLAQDVYAKDNLPPFPASVKDGYAVRAADGPGDRFIIGESQAGEQPTQTVMPGQVMRVTTGAPIPCGADAVVQVEDTELIRESDDGTEELEVRILVQARPGQDIRPIGHDIKRGECVLAKGTHMGPSEIGLLATVGVTEVEVNKFPVVAVMSTGNELLNPEDDLLPGKIRDSNRSTLLATIQEHGYPTINLGIVGDNPDDLLNALNEGISRADVIITSGGVSMGEKDYLKQVLDIDLHAQIHFGRVFMKPGLPTTFATLDIDGVRKIIFALPGNPVSAVVTCNLFVVPALRKMQGILDPRPTIIKARLSCDVKLDPRPEYHRCILTWHHQEPLPWAQSTGNQMSSRLMSMRSANGLLMLPPKTEQYVELHKGEVVDVMVIGRL.

Positions 14-166 are MPT Mo-transferase; that stretch reads QIRVGVLTVS…FILPALPHAI (153 aa). An interaction with GABARAP region spans residues 140 to 316; the sequence is LIINLPGSKK…VDITKVARRH (177 aa). Disordered regions lie at residues 181–232 and 260–290; these read DELE…DSSS and TASLSTTPSESPRAQATSRLSTASCPTPKVQ. Residues 187 to 199 are compositionally biased toward pro residues; the sequence is PSPPPPLSPPPTT. Residues serine 188 and serine 194 each carry the phosphoserine modification. Position 198 is a phosphothreonine (threonine 198). Serine 200 is modified (phosphoserine). The S-palmitoyl cysteine moiety is linked to residue cysteine 212. Positions 261–290 are enriched in polar residues; sequence ASLSTTPSESPRAQATSRLSTASCPTPKVQ. The residue at position 262 (serine 262) is a Phosphoserine. Threonine 265 and threonine 266 each carry phosphothreonine. 2 positions are modified to phosphoserine: serine 268 and serine 270. A lipid anchor (S-palmitoyl cysteine) is attached at cysteine 284. Serine 305 carries the post-translational modification Phosphoserine. Residues 326–736 are MPT adenylyltransferase; sequence MDKAFITVLE…VVDVMVIGRL (411 aa).

In the N-terminal section; belongs to the MoaB/Mog family. The protein in the C-terminal section; belongs to the MoeA family. In terms of assembly, homotrimer, homodimer and homooligomer. Interacts with GABARAP. Interacts with SRGAP2 (via SH3 domain). Interacts with GABRA3. Interacts with GLRB. GABRA3 and GLRB occupy overlapping binding sites. Interacts with ARHGAP32; IQSEC3, INSYN1 and INSYN2A. It depends on Mg(2+) as a cofactor. In terms of processing, palmitoylated. Palmitoylation is stimulated by GABA type A receptors activity. Palmitoylation by ZDHHC12 regulates clustering at synapses.

It is found in the postsynaptic cell membrane. The protein localises to the cell membrane. The protein resides in the cytoplasm. It localises to the cytosol. Its subcellular location is the cytoskeleton. It is found in the cell projection. The protein localises to the dendrite. The protein resides in the postsynaptic density. It catalyses the reaction molybdopterin + ATP + H(+) = adenylyl-molybdopterin + diphosphate. The catalysed reaction is adenylyl-molybdopterin + molybdate = Mo-molybdopterin + AMP + H(+). Its pathway is cofactor biosynthesis; molybdopterin biosynthesis. With respect to regulation, inhibited by copper and tungsten. In terms of biological role, microtubule-associated protein involved in membrane protein-cytoskeleton interactions. It is thought to anchor the inhibitory glycine receptor (GLYR) to subsynaptic microtubules. Acts as a major instructive molecule at inhibitory synapses, where it also clusters GABA type A receptors. Its function is as follows. Also has a catalytic activity and catalyzes two steps in the biosynthesis of the molybdenum cofactor. In the first step, molybdopterin is adenylated. Subsequently, molybdate is inserted into adenylated molybdopterin and AMP is released. In Homo sapiens (Human), this protein is Gephyrin.